A 1001-amino-acid polypeptide reads, in one-letter code: Ribonuclease E/G-like protein, chloroplastic (1001 aa).

The transit peptide at 1 to 48 (MDVTEVPWRRLPQFSVSSRASWLVSSGFPLSSYMFSHVERGKTFRLTL) directs the protein to the chloroplast. Positions 76–185 (SRLKGLCEVV…KIIIRDSWMS (110 aa)) constitute a CBM20 domain. Residue Asp-755 participates in Mg(2+) binding. Residues 769–789 (QEKAILEVNLAAARQIAREIR) adopt a coiled-coil conformation. Asp-800 contributes to the Mg(2+) binding site. Residues Cys-858 and Cys-861 each contribute to the Zn(2+) site.

Belongs to the RNase E/G family. Part of a chloroplastic degradosome-like complex. Interacts with RHON1. A homotetramer formed by a dimer of dimers. Mg(2+) is required as a cofactor. It depends on Zn(2+) as a cofactor. As to expression, expressed in cotyledons, rosette and cauline leaves.

It is found in the plastid. It localises to the chloroplast stroma. In terms of biological role, involved in intercistronic processing of primary transcripts from chloroplast operons. The endonucleolytic activity of the enzyme depends on the number of phosphates at the 5' end, is inhibited by structured RNA, and preferentially cleaves A/U-rich sequences. The chain is Ribonuclease E/G-like protein, chloroplastic (RNE) from Arabidopsis thaliana (Mouse-ear cress).